We begin with the raw amino-acid sequence, 158 residues long: MFDILMYLFENFIHSETEIRVDQDELTEELVRAGFHHDEIYKALAWLEKLAALQETDIKPYFCKGISTSLSRIYTHEEQMRLDVECRGFLMFLEQVNVLDASTREMVIDRVMEIDSSEFCLEDLKWVVLMVLFNVPGKEKAYAQMEDLLFEEPDGILH.

It belongs to the Smg family.

This Alteromonas mediterranea (strain DSM 17117 / CIP 110805 / LMG 28347 / Deep ecotype) protein is Protein Smg homolog.